The sequence spans 321 residues: Beta-lactamase (321 aa).

Positions 1-30 (MEKNRKKQIVVLSIALVCIFILVFSLFHKS) are cleaved as a signal peptide. The active-site Acyl-ester intermediate is Ser83. Substrate is bound at residue 233–235 (KTG).

It belongs to the class-A beta-lactamase family.

It carries out the reaction a beta-lactam + H2O = a substituted beta-amino acid. With respect to regulation, inhibited by clavulanic acid. Functionally, can hydrolyze cephalosporins, penicillins and also cefoxitin; but at a slow rate. The sequence is that of Beta-lactamase (cfxA) from Phocaeicola vulgatus (Bacteroides vulgatus).